The chain runs to 456 residues: Bifunctional protein GlmU (456 aa).

A pyrophosphorylase region spans residues 1–229; that stretch reads MLNSAMSVVI…ISETDGVNNR (229 aa). Residues 11-14, lysine 25, glutamine 76, 81-82, 103-105, glycine 140, glutamate 154, asparagine 169, and asparagine 227 contribute to the UDP-N-acetyl-alpha-D-glucosamine site; these read LAAG, GT, and YGD. Aspartate 105 contacts Mg(2+). Asparagine 227 is a Mg(2+) binding site. A linker region spans residues 230–250; that stretch reads LQLSRLERIYQAEQAEKLLLS. An N-acetyltransferase region spans residues 251–456; it reads GVMLRDPARF…QGWQRPVKKK (206 aa). UDP-N-acetyl-alpha-D-glucosamine-binding residues include arginine 333 and lysine 351. The active-site Proton acceptor is the histidine 363. UDP-N-acetyl-alpha-D-glucosamine is bound by residues tyrosine 366 and asparagine 377. Residues alanine 380, 386 to 387, serine 405, alanine 423, and arginine 440 each bind acetyl-CoA; that span reads NY.

This sequence in the N-terminal section; belongs to the N-acetylglucosamine-1-phosphate uridyltransferase family. The protein in the C-terminal section; belongs to the transferase hexapeptide repeat family. Homotrimer. It depends on Mg(2+) as a cofactor.

The protein resides in the cytoplasm. The enzyme catalyses alpha-D-glucosamine 1-phosphate + acetyl-CoA = N-acetyl-alpha-D-glucosamine 1-phosphate + CoA + H(+). It carries out the reaction N-acetyl-alpha-D-glucosamine 1-phosphate + UTP + H(+) = UDP-N-acetyl-alpha-D-glucosamine + diphosphate. The protein operates within nucleotide-sugar biosynthesis; UDP-N-acetyl-alpha-D-glucosamine biosynthesis; N-acetyl-alpha-D-glucosamine 1-phosphate from alpha-D-glucosamine 6-phosphate (route II): step 2/2. It functions in the pathway nucleotide-sugar biosynthesis; UDP-N-acetyl-alpha-D-glucosamine biosynthesis; UDP-N-acetyl-alpha-D-glucosamine from N-acetyl-alpha-D-glucosamine 1-phosphate: step 1/1. Its pathway is bacterial outer membrane biogenesis; LPS lipid A biosynthesis. Catalyzes the last two sequential reactions in the de novo biosynthetic pathway for UDP-N-acetylglucosamine (UDP-GlcNAc). The C-terminal domain catalyzes the transfer of acetyl group from acetyl coenzyme A to glucosamine-1-phosphate (GlcN-1-P) to produce N-acetylglucosamine-1-phosphate (GlcNAc-1-P), which is converted into UDP-GlcNAc by the transfer of uridine 5-monophosphate (from uridine 5-triphosphate), a reaction catalyzed by the N-terminal domain. The polypeptide is Bifunctional protein GlmU (Salmonella heidelberg (strain SL476)).